The following is a 348-amino-acid chain: Bifunctional nitrilase/nitrile hydratase NIT4B (348 aa).

The region spanning Val-29–Leu-300 is the CN hydrolase domain. Catalysis depends on Glu-69, which acts as the Proton acceptor. Residue Lys-156 is the Proton donor of the active site. Catalysis depends on Cys-190, which acts as the Nucleophile.

Belongs to the carbon-nitrogen hydrolase superfamily. Nitrilase family. Expressed in roots, stems, cotyledons, leaves and flowers.

The enzyme catalyses a nitrile + 2 H2O = a carboxylate + NH4(+). The catalysed reaction is 3-cyano-L-alanine + 2 H2O = L-aspartate + NH4(+). In terms of biological role, highly specific for beta-cyano-L-alanine (Ala(CN)). Low activity with 3-phenylpropionitrile (PPN). Not associated with auxin production but may be involved in cyanide detoxification. This Nicotiana tabacum (Common tobacco) protein is Bifunctional nitrilase/nitrile hydratase NIT4B (NIT4B).